We begin with the raw amino-acid sequence, 272 residues long: Indole-3-glycerol phosphate synthase (272 aa).

The protein belongs to the TrpC family.

It catalyses the reaction 1-(2-carboxyphenylamino)-1-deoxy-D-ribulose 5-phosphate + H(+) = (1S,2R)-1-C-(indol-3-yl)glycerol 3-phosphate + CO2 + H2O. It participates in amino-acid biosynthesis; L-tryptophan biosynthesis; L-tryptophan from chorismate: step 4/5. The chain is Indole-3-glycerol phosphate synthase from Mycolicibacterium smegmatis (strain ATCC 700084 / mc(2)155) (Mycobacterium smegmatis).